A 473-amino-acid polypeptide reads, in one-letter code: tRNA-2-methylthio-N(6)-dimethylallyladenosine synthase (473 aa).

The segment at 1–21 (MTQDSALLQAPEAIPSESLRD) is disordered. The 121-residue stretch at 26–146 (RKVFIKTYGC…LPEALRRAKQ (121 aa)) folds into the MTTase N-terminal domain. Cysteine 35, cysteine 71, cysteine 109, cysteine 187, cysteine 191, and cysteine 194 together coordinate [4Fe-4S] cluster. In terms of domain architecture, Radical SAM core spans 173 to 405 (RARGVTAFLT…QMLLLKQQQE (233 aa)). The TRAM domain maps to 408–470 (ESCVGKEIDL…TNSLFAEHAE (63 aa)).

This sequence belongs to the methylthiotransferase family. MiaB subfamily. Monomer. Requires [4Fe-4S] cluster as cofactor.

The protein resides in the cytoplasm. It carries out the reaction N(6)-dimethylallyladenosine(37) in tRNA + (sulfur carrier)-SH + AH2 + 2 S-adenosyl-L-methionine = 2-methylsulfanyl-N(6)-dimethylallyladenosine(37) in tRNA + (sulfur carrier)-H + 5'-deoxyadenosine + L-methionine + A + S-adenosyl-L-homocysteine + 2 H(+). In terms of biological role, catalyzes the methylthiolation of N6-(dimethylallyl)adenosine (i(6)A), leading to the formation of 2-methylthio-N6-(dimethylallyl)adenosine (ms(2)i(6)A) at position 37 in tRNAs that read codons beginning with uridine. This Rhizobium johnstonii (strain DSM 114642 / LMG 32736 / 3841) (Rhizobium leguminosarum bv. viciae) protein is tRNA-2-methylthio-N(6)-dimethylallyladenosine synthase.